The chain runs to 218 residues: Eukaryotic translation initiation factor 3 subunit K (218 aa).

One can recognise a PCI domain in the interval 42-204 (YDLEANLAVL…NIKPKNIVEK (163 aa)).

It belongs to the eIF-3 subunit K family. In terms of assembly, component of the eukaryotic translation initiation factor 3 (eIF-3) complex, which is composed of 13 subunits: eif3a, eif3b, eif3c, eif3d, eif3e, eif3f, eif3g, eif3h, eif3i, eif3j, eif3k, eif3l and eif3m.

The protein localises to the nucleus. The protein resides in the cytoplasm. In terms of biological role, component of the eukaryotic translation initiation factor 3 (eIF-3) complex, which is involved in protein synthesis of a specialized repertoire of mRNAs and, together with other initiation factors, stimulates binding of mRNA and methionyl-tRNAi to the 40S ribosome. The eIF-3 complex specifically targets and initiates translation of a subset of mRNAs involved in cell proliferation. This is Eukaryotic translation initiation factor 3 subunit K (eif3k) from Xenopus laevis (African clawed frog).